A 487-amino-acid polypeptide reads, in one-letter code: Acetyl-coenzyme A carboxylase carboxyl transferase subunit beta, chloroplastic (487 aa).

The CoA carboxyltransferase N-terminal domain maps to 223 to 487 (LWIQCDNCYG…FFPLKKNEIK (265 aa)). Residues Cys-227, Cys-230, Cys-243, and Cys-246 each coordinate Zn(2+). A C4-type zinc finger spans residues 227–246 (CDNCYGLMYKKVKMNVCEQC).

Belongs to the AccD/PCCB family. As to quaternary structure, acetyl-CoA carboxylase is a heterohexamer composed of biotin carboxyl carrier protein, biotin carboxylase and 2 subunits each of ACCase subunit alpha and ACCase plastid-coded subunit beta (accD). The cofactor is Zn(2+).

It localises to the plastid. It is found in the chloroplast stroma. The catalysed reaction is N(6)-carboxybiotinyl-L-lysyl-[protein] + acetyl-CoA = N(6)-biotinyl-L-lysyl-[protein] + malonyl-CoA. It participates in lipid metabolism; malonyl-CoA biosynthesis; malonyl-CoA from acetyl-CoA: step 1/1. Functionally, component of the acetyl coenzyme A carboxylase (ACC) complex. Biotin carboxylase (BC) catalyzes the carboxylation of biotin on its carrier protein (BCCP) and then the CO(2) group is transferred by the transcarboxylase to acetyl-CoA to form malonyl-CoA. This chain is Acetyl-coenzyme A carboxylase carboxyl transferase subunit beta, chloroplastic, found in Lepidium virginicum (Virginia pepperweed).